The following is a 413-amino-acid chain: Alpha-1-antitrypsin-like protein CM55-ST (413 aa).

The N-terminal stretch at 1 to 24 (MPSSISWGLLLLAALSCLGPGSLA) is a signal peptide. Gln25 bears the Pyrrolidone carboxylic acid mark. N-linked (GlcNAc...) asparagine glycosylation is found at Asn65, Asn102, Asn165, and Asn266. Residues 368-387 (GGTVLGNIRSTLRYEVIFDR) form an RCL region.

The protein belongs to the serpin family. As to expression, expressed in liver.

This Tamias sibiricus (Siberian chipmunk) protein is Alpha-1-antitrypsin-like protein CM55-ST.